Here is a 396-residue protein sequence, read N- to C-terminus: Probable sugar efflux transporter (396 aa).

The next 12 membrane-spanning stretches (helical) occupy residues 15–35 (VVTL…PVGL), 50–70 (VGIM…PFML), 81–101 (LICL…SWSF), 103–123 (VLVI…SITA), 136–156 (AQAL…GLPL), 170–190 (FFAI…LLPL), 209–229 (PALM…YTAY), 246–266 (FATA…VIFG), 275–295 (ALVS…LPAA), 299–319 (IHLG…GLGM), 333–353 (VAMA…ALVG), and 364–384 (MIGY…IIIF).

Belongs to the major facilitator superfamily. SotB (TC 2.A.1.2) family.

Its subcellular location is the cell inner membrane. In terms of biological role, involved in the efflux of sugars. The physiological role may be the reduction of the intracellular concentration of toxic sugars or sugar metabolites. This Escherichia coli O127:H6 (strain E2348/69 / EPEC) protein is Probable sugar efflux transporter.